A 702-amino-acid chain; its full sequence is Protein-glucosylgalactosylhydroxylysine glucosidase (702 aa).

310–311 provides a ligand contact to substrate; that stretch reads WD. The active-site Proton donor is E440. Residue 508 to 509 participates in substrate binding; the sequence is KQ.

It belongs to the glycosyl hydrolase 65 family.

The catalysed reaction is (5R)-5-O-[alpha-D-glucosyl-(1-&gt;2)-beta-D-galactosyl]-5-hydroxy-L-lysyl-[collagen] + H2O = (5R)-5-O-(beta-D-galactosyl)-5-hydroxy-L-lysyl-[collagen] + D-glucose. Its function is as follows. Catalyzes the hydrolysis of glucose from the disaccharide unit linked to hydroxylysine residues of collagen and collagen-like proteins. This chain is Protein-glucosylgalactosylhydroxylysine glucosidase, found in Gallus gallus (Chicken).